The following is a 366-amino-acid chain: Histidinol-phosphate aminotransferase 2 (366 aa).

At lysine 226 the chain carries N6-(pyridoxal phosphate)lysine.

This sequence belongs to the class-II pyridoxal-phosphate-dependent aminotransferase family. Histidinol-phosphate aminotransferase subfamily. In terms of assembly, homodimer. Pyridoxal 5'-phosphate is required as a cofactor.

The catalysed reaction is L-histidinol phosphate + 2-oxoglutarate = 3-(imidazol-4-yl)-2-oxopropyl phosphate + L-glutamate. Its pathway is amino-acid biosynthesis; L-histidine biosynthesis; L-histidine from 5-phospho-alpha-D-ribose 1-diphosphate: step 7/9. This is Histidinol-phosphate aminotransferase 2 from Cupriavidus pinatubonensis (strain JMP 134 / LMG 1197) (Cupriavidus necator (strain JMP 134)).